The following is a 118-amino-acid chain: Flowering-promoting factor 1-like protein 4 (118 aa).

Belongs to the FPF1 family.

In Oryza sativa subsp. japonica (Rice), this protein is Flowering-promoting factor 1-like protein 4.